A 444-amino-acid polypeptide reads, in one-letter code: NAD(+)--protein-arginine ADP-ribosyltransferase Tre1 (444 aa).

The PAAR domain stretch occupies residues 72–140 (PRHVTGVLAD…NDLLACSAEI (69 aa)). Residues 266 to 444 (MTLAEAVGQE…TTHLLYREIP (179 aa)) enclose the TR mART core domain. Positions 274–444 (QEQAKVWTQT…TTHLLYREIP (171 aa)) are ART domain. Active-site residues include Arg356, Ser381, and Glu415.

The protein belongs to the Arg-specific ADP-ribosyltransferase family. As to quaternary structure, forms a stable complex with cognate immunity protein Tri1-Sp.

It localises to the secreted. Its subcellular location is the host cytoplasm. It carries out the reaction L-arginyl-[protein] + NAD(+) = N(omega)-(ADP-D-ribosyl)-L-arginyl-[protein] + nicotinamide + H(+). Functionally, toxic component of a contact-dependent interbacterial competition system (also called effector-immunity systems). Acts by ADP-ribosylating a number of target proteins in target cells; E.coli target proteins include FtsZ, EFTu, RNase E, Fis, RL9, SucB, and LolD. FtsZ is thought to be the physiologically relevant target as it is ADP-ribosylated on a critical residue. ADP-ribosylation of FtsZ prevents formation of the FtsZ mid-cell ring and inhibits cell division. Overexpression of the whole Tre1 protein or the ART domain in E.coli is toxic; cells elongate dramatically and some undergo lysis. Toxic activity is neutralized by coexpression of the cognate immunity protein Tri1-Sp; Tri1-Sp neutralizes this protein both by binding to and occluding the active site (via Tri1's N-terminal extension) and by hydrolysis of the ADP-ribosyl moiety from the target protein. Tre1 can also be neutralized by non-cognate immunity protein Tri1-Pp from P.putida strain GB-1, with which it does not form a stable complex; DraG of R.palustris does not neutralize the toxic effects of this protein. In interbacterial competition studies Tri1 from P.putida strain B6-2 also neutralizes this protein. The sequence is that of NAD(+)--protein-arginine ADP-ribosyltransferase Tre1 from Serratia proteamaculans (strain 568).